A 744-amino-acid chain; its full sequence is MPEDQAGAAMEEASPYSLLDICLNFLTTHLEKFCSARQDGTLCLQEPGVFPQEVADRLLRTMAFHGLLNDGTVGIFRGNQMRLKRACIRKAKISAVAFRKAFCHHKLVELDATGVNADITITDIISGLGSNKWIQQNLQCLVLNSLTLSLEDPYERCFSRLSGLRALSITNVLFYNEDLAEVASLPRLESLDISNTSITDITALLACKDRLKSLTMHHLKCLKMTTTQILDVVRELKHLNHLDISDDKQFTSDIALRLLEQKDILPNLVSLDVSGRKHVTDKAVEAFIQQRPSMQFVGLLATDAGYSEFLTGEGHLKVSGEANETQIAEALKRYSERAFFVREALFHLFSLTHVMEKTKPEILKLVVTGMRNHPMNLPVQLAASACVFNLTKQDLAAGMPVRLLADVTHLLLKAMEHFPNHQQLQKNCLLSLCSDRILQDVPFNRFEAAKLVMQWLCNHEDQNMQRMAVAIISILAAKLSTEQTAQLGTELFIVRQLLQIVKQKTNQNSVDTTLKFTLSALWNLTDESPTTCRHFIENQGLELFMRVLESFPTESSIQQKVLGLLNNIAEVQELHSELMWKDFIDHISSLLHSVEVEVSYFAAGIIAHLISRGEQAWTLSRSQRNSLLDDLHSAILKWPTPECEMVAYRSFNPFFPLLGCFTTPGVQLWAVWAMQHVCSKNPSRYCSMLIEEGGLQHLYNIKDHEHTDPHVQQIAVAILDSLEKHIVRHGRPPPCKKQPQARLN.

LRR repeat units follow at residues 185 to 208 (LPRL…LACK), 216 to 236 (MHHL…VREL), and 237 to 261 (KHLN…LLEQ).

It belongs to the zyg-11 family. As to quaternary structure, (Microbial infection) Interacts with SARS-COV-2 protein ORF10. In terms of assembly, interacts with ELOC/Elongin C. Part of an E3 ubiquitin ligase complex including ZYG11B, CUL2 and Elongin BC. In terms of processing, (Microbial infection) Ubiquitinated; leading to proteasomal degradation in the presence of herpes simplex virus 1/HHV-1.

The protein resides in the cytoplasm. Serves as substrate adapter subunit in the E3 ubiquitin ligase complex ZYG11B-CUL2-Elongin BC. Acts to target substrates bearing N-terminal degrons for proteasomal degradation with the first four residues of substrates being the key recognition elements. Prefers Nt-Gly but also has the capacity to recognize Nt-Ser, -Ala and -Cys. Involved in the clearance of proteolytic fragments generated by caspase cleavage during apoptosis since N-terminal glycine degrons are strongly enriched at caspase cleavage sites. Also important in the quality control of protein N-myristoylation in which N-terminal glycine degrons are conditionally exposed after a failure of N-myristoylation. In addition, plays a role in the amplification of cGAS to enhance innate immune response. Mechanistically, strengthens the processes of cGAS binding with dsDNA and assembling oligomers and also accelerates and stabilizes cGAS-DNA condensation, thereby enhancing production of antiviral IFNs and inflammatory cytokines. This is Protein zyg-11 homolog B from Homo sapiens (Human).